The chain runs to 510 residues: Bifunctional purine biosynthesis protein PurH (510 aa).

In terms of domain architecture, MGS-like spans 1–145 (MTKRALLSVS…KNFAAVLPIV (145 aa)).

Belongs to the PurH family.

It catalyses the reaction (6R)-10-formyltetrahydrofolate + 5-amino-1-(5-phospho-beta-D-ribosyl)imidazole-4-carboxamide = 5-formamido-1-(5-phospho-D-ribosyl)imidazole-4-carboxamide + (6S)-5,6,7,8-tetrahydrofolate. The catalysed reaction is IMP + H2O = 5-formamido-1-(5-phospho-D-ribosyl)imidazole-4-carboxamide. It functions in the pathway purine metabolism; IMP biosynthesis via de novo pathway; 5-formamido-1-(5-phospho-D-ribosyl)imidazole-4-carboxamide from 5-amino-1-(5-phospho-D-ribosyl)imidazole-4-carboxamide (10-formyl THF route): step 1/1. The protein operates within purine metabolism; IMP biosynthesis via de novo pathway; IMP from 5-formamido-1-(5-phospho-D-ribosyl)imidazole-4-carboxamide: step 1/1. The chain is Bifunctional purine biosynthesis protein PurH from Lactiplantibacillus plantarum (strain ATCC BAA-793 / NCIMB 8826 / WCFS1) (Lactobacillus plantarum).